The chain runs to 313 residues: Calcium homeostasis modulator protein 6 (313 aa).

At 1-21 the chain is on the cytoplasmic side; it reads MEKFKAVLDLQRKHRNALGYS. Residues 22–37 traverse the membrane as a helical segment; sequence LVTLLTAGGEKIFSSV. At 38-46 the chain is on the extracellular side; the sequence is VFQCPCTAT. 3 cysteine pairs are disulfide-bonded: Cys-41-Cys-125, Cys-43-Cys-154, and Cys-138-Cys-145. The helical transmembrane segment at 47–68 threads the bilayer; the sequence is WNLPYGLVFLLVPALALFLLGY. Residues 69 to 101 are Cytoplasmic-facing; that stretch reads ALSARTWRLLTGCCSRSARFSSGLRSAFVCAQL. The helical transmembrane segment at 102–126 threads the bilayer; that stretch reads SMTAAFAPLTWVAVALLEGSFYQCA. At 127–167 the chain is on the extracellular side; that stretch reads VSGSARLAPYLCKGRDPNCNATLPQAPCNKQKVEMQEILSQ. The chain crosses the membrane as a helical span at residues 168–190; the sequence is LKAQSQVFGWILIAAVIILLLLV. The Cytoplasmic segment spans residues 191–313; the sequence is KSVTRCFSPV…DMSMTNTHEL (123 aa).

Belongs to the CALHM family. In terms of assembly, oligomerizes to form decameric and undecameric channels. N-glycosylated. Immune cells in primary and secondary lymphoid organs.

The protein resides in the cell membrane. It catalyses the reaction ATP(in) = ATP(out). Its activity is regulated as follows. Inhibited by Gd(3+). Partially inhibited by divalent ions Ca(2+) and Ba(2+). Pore-forming subunit of an ATP-permeable channel. In response to pathogen-derived and proinflammatory stimuli, relocates from intracellular compartments to NK-dendritic cell and NK-macrophage immune synapses where it mediates ATP efflux and NK cell activation involved in antimicrobial and antitumor responses. May assemble to form gap junction channel-like structures with gating and ion conductance likely regulated by membrane lipids and voltage rather than by extracellular calcium levels. The polypeptide is Calcium homeostasis modulator protein 6 (Mus musculus (Mouse)).